Consider the following 236-residue polypeptide: Uridylate kinase (236 aa).

10-13 lines the ATP pocket; that stretch reads KLSG. G52 contributes to the UMP binding site. G53 and R57 together coordinate ATP. UMP is bound by residues D72 and 133-140; that span reads TGNPFFTT. The ATP site is built by T160, Y166, and D169.

It belongs to the UMP kinase family. As to quaternary structure, homohexamer.

It localises to the cytoplasm. The catalysed reaction is UMP + ATP = UDP + ADP. It participates in pyrimidine metabolism; CTP biosynthesis via de novo pathway; UDP from UMP (UMPK route): step 1/1. Inhibited by UTP. Catalyzes the reversible phosphorylation of UMP to UDP. The polypeptide is Uridylate kinase (Cupriavidus pinatubonensis (strain JMP 134 / LMG 1197) (Cupriavidus necator (strain JMP 134))).